Consider the following 156-residue polypeptide: Ribosomal RNA large subunit methyltransferase H (156 aa).

S-adenosyl-L-methionine is bound by residues leucine 73, glycine 104, and 123-128 (ISSMTL).

Belongs to the RNA methyltransferase RlmH family. Homodimer.

It is found in the cytoplasm. The enzyme catalyses pseudouridine(1915) in 23S rRNA + S-adenosyl-L-methionine = N(3)-methylpseudouridine(1915) in 23S rRNA + S-adenosyl-L-homocysteine + H(+). Specifically methylates the pseudouridine at position 1915 (m3Psi1915) in 23S rRNA. This Burkholderia lata (strain ATCC 17760 / DSM 23089 / LMG 22485 / NCIMB 9086 / R18194 / 383) protein is Ribosomal RNA large subunit methyltransferase H.